The sequence spans 535 residues: T-complex protein 1 subunit zeta (535 aa).

Belongs to the TCP-1 chaperonin family. Heterooligomeric complex of about 850 to 900 kDa that forms two stacked rings, 12 to 16 nm in diameter.

It localises to the cytoplasm. Functionally, molecular chaperone; assists the folding of proteins upon ATP hydrolysis. Known to play a role, in vitro, in the folding of actin and tubulin. This Schizosaccharomyces pombe (strain 972 / ATCC 24843) (Fission yeast) protein is T-complex protein 1 subunit zeta (cct6).